A 122-amino-acid polypeptide reads, in one-letter code: Large ribosomal subunit protein uL14 (122 aa).

It belongs to the universal ribosomal protein uL14 family. As to quaternary structure, part of the 50S ribosomal subunit. Forms a cluster with proteins L3 and L19. In the 70S ribosome, L14 and L19 interact and together make contacts with the 16S rRNA in bridges B5 and B8.

Its function is as follows. Binds to 23S rRNA. Forms part of two intersubunit bridges in the 70S ribosome. The chain is Large ribosomal subunit protein uL14 from Mycobacterium leprae (strain TN).